Here is a 458-residue protein sequence, read N- to C-terminus: uncharacterized protein (458 aa).

This sequence belongs to the glycerate kinase type-2 family.

This is an uncharacterized protein from Caenorhabditis elegans.